The sequence spans 232 residues: Large ribosomal subunit protein uL1 (232 aa).

The protein belongs to the universal ribosomal protein uL1 family. In terms of assembly, part of the 50S ribosomal subunit.

In terms of biological role, binds directly to 23S rRNA. The L1 stalk is quite mobile in the ribosome, and is involved in E site tRNA release. Its function is as follows. Protein L1 is also a translational repressor protein, it controls the translation of the L11 operon by binding to its mRNA. This chain is Large ribosomal subunit protein uL1, found in Xanthomonas campestris pv. campestris (strain B100).